The following is a 338-amino-acid chain: SPbeta prophage-derived uncharacterized protein YonB (338 aa).

The sequence is that of SPbeta prophage-derived uncharacterized protein YonB (yonB) from Bacillus subtilis (strain 168).